Consider the following 186-residue polypeptide: uncharacterized protein (186 aa).

The next 4 membrane-spanning stretches (helical) occupy residues 5-25 (LIAC…FEDI), 39-59 (IITI…KLFA), 62-82 (NLLF…ILLF), and 122-142 (GFFE…IALM).

It localises to the cell membrane. This is an uncharacterized protein from Borreliella burgdorferi (strain ATCC 35210 / DSM 4680 / CIP 102532 / B31) (Borrelia burgdorferi).